A 145-amino-acid polypeptide reads, in one-letter code: Acidic phospholipase A2 (145 aa).

The N-terminal stretch at 1–21 (MYPAHLLVLLAVCVSLLGAAS) is a signal peptide. Residues 22–27 (IPPLPL) constitute a propeptide that is removed on maturation. Intrachain disulfides connect Cys38/Cys98, Cys54/Cys144, Cys56/Cys72, Cys71/Cys125, Cys78/Cys118, Cys87/Cys111, and Cys105/Cys116. Ca(2+)-binding residues include Tyr55 and Gly57. His75 is a catalytic residue. A Ca(2+)-binding site is contributed by Asp76. The active site involves Asp119.

This sequence belongs to the phospholipase A2 family. Group I subfamily. D49 sub-subfamily. Requires Ca(2+) as cofactor. As to expression, expressed by the venom gland.

The protein resides in the secreted. It catalyses the reaction a 1,2-diacyl-sn-glycero-3-phosphocholine + H2O = a 1-acyl-sn-glycero-3-phosphocholine + a fatty acid + H(+). In terms of biological role, PLA2 catalyzes the calcium-dependent hydrolysis of the 2-acyl groups in 3-sn-phosphoglycerides. The protein is Acidic phospholipase A2 of Notechis scutatus scutatus (Mainland tiger snake).